Reading from the N-terminus, the 931-residue chain is Semaphorin-6C (931 aa).

The N-terminal stretch at 1-25 (MPRAPHSMPLLLLLLLLSSLPQAQA) is a signal peptide. Over 26–605 (AFPQDPTPLL…ASASRSIPIP (580 aa)) the chain is Extracellular. Residues 31–517 (PTPLLTSDLQ…FPGCIVYLSL (487 aa)) enclose the Sema domain. The N-linked (GlcNAc...) asparagine glycan is linked to Asn71. 4 cysteine pairs are disulfide-bonded: Cys112–Cys122, Cys140–Cys149, Cys263–Cys374, and Cys288–Cys333. Residue Asn287 is glycosylated (N-linked (GlcNAc...) asparagine). Asn438 carries N-linked (GlcNAc...) asparagine glycosylation. Disulfide bonds link Cys480–Cys511, Cys520–Cys538, Cys526–Cys571, and Cys530–Cys546. Residues 556 to 591 (DVDLTGNQESTEHGDCQDGATGSQSGPGDSAYGVRR) form a disordered region. The helical transmembrane segment at 606-626 (LLLACVAAAFALGASVSGLLV) threads the bilayer. At 627 to 931 (SCACRRANRR…PAPHGGHFNF (305 aa)) the chain is on the cytoplasmic side. Disordered regions lie at residues 655-747 (LARL…GGPA) and 777-931 (HGPQ…HFNF). Residues 693–708 (PPELACLPTPETTPEL) show a composition bias toward low complexity. Positions 893-906 (PEGHRGRSLKRVDV) are enriched in basic and acidic residues. Over residues 911 to 923 (SPKPPLASPPQPA) the composition is skewed to pro residues.

It belongs to the semaphorin family.

The protein localises to the cell membrane. In terms of biological role, may be a stop signal for the dorsal root ganglion neurons in their target areas, and possibly also for other neurons. May also be involved in the maintenance and remodeling of neuronal connections. The chain is Semaphorin-6C (Sema6c) from Mus musculus (Mouse).